The following is a 447-amino-acid chain: N-succinylarginine dihydrolase (447 aa).

Substrate-binding positions include 19-28 (AGLSFGNEAS), N110, and 137-138 (HR). E174 is an active-site residue. A substrate-binding site is contributed by R212. Residue H248 is part of the active site. 2 residues coordinate substrate: D250 and N359. C365 (nucleophile) is an active-site residue.

This sequence belongs to the succinylarginine dihydrolase family. In terms of assembly, homodimer.

It carries out the reaction N(2)-succinyl-L-arginine + 2 H2O + 2 H(+) = N(2)-succinyl-L-ornithine + 2 NH4(+) + CO2. The protein operates within amino-acid degradation; L-arginine degradation via AST pathway; L-glutamate and succinate from L-arginine: step 2/5. Catalyzes the hydrolysis of N(2)-succinylarginine into N(2)-succinylornithine, ammonia and CO(2). In Escherichia coli O7:K1 (strain IAI39 / ExPEC), this protein is N-succinylarginine dihydrolase.